Consider the following 208-residue polypeptide: Uracil phosphoribosyltransferase (208 aa).

5-phospho-alpha-D-ribose 1-diphosphate-binding positions include Arg78, Arg103, and 130–138 (DPMLATANS). Residues Ile193 and 198-200 (GDA) contribute to the uracil site. Asp199 provides a ligand contact to 5-phospho-alpha-D-ribose 1-diphosphate.

The protein belongs to the UPRTase family. It depends on Mg(2+) as a cofactor.

The catalysed reaction is UMP + diphosphate = 5-phospho-alpha-D-ribose 1-diphosphate + uracil. It participates in pyrimidine metabolism; UMP biosynthesis via salvage pathway; UMP from uracil: step 1/1. With respect to regulation, allosterically activated by GTP. Its function is as follows. Catalyzes the conversion of uracil and 5-phospho-alpha-D-ribose 1-diphosphate (PRPP) to UMP and diphosphate. This Brucella canis (strain ATCC 23365 / NCTC 10854 / RM-666) protein is Uracil phosphoribosyltransferase.